A 143-amino-acid polypeptide reads, in one-letter code: Anti-sigma F factor (143 aa).

This sequence belongs to the anti-sigma-factor family.

The catalysed reaction is L-seryl-[protein] + ATP = O-phospho-L-seryl-[protein] + ADP + H(+). It catalyses the reaction L-threonyl-[protein] + ATP = O-phospho-L-threonyl-[protein] + ADP + H(+). In terms of biological role, binds to sigma F and blocks its ability to form an RNA polymerase holoenzyme (E-sigma F). Phosphorylates SpoIIAA on a serine residue. This phosphorylation may enable SpoIIAA to act as an anti-anti-sigma factor that counteracts SpoIIAB and thus releases sigma F from inhibition. The protein is Anti-sigma F factor of Caldanaerobacter subterraneus subsp. tengcongensis (strain DSM 15242 / JCM 11007 / NBRC 100824 / MB4) (Thermoanaerobacter tengcongensis).